Here is a 98-residue protein sequence, read N- to C-terminus: NADH-ubiquinone oxidoreductase chain 4L (98 aa).

The next 3 helical transmembrane spans lie at 1–21 (MLSI…GVLI), 29–49 (TLLC…LLIT), and 59–79 (TPLI…ALLV).

This sequence belongs to the complex I subunit 4L family. As to quaternary structure, core subunit of respiratory chain NADH dehydrogenase (Complex I) which is composed of 45 different subunits.

Its subcellular location is the mitochondrion inner membrane. The catalysed reaction is a ubiquinone + NADH + 5 H(+)(in) = a ubiquinol + NAD(+) + 4 H(+)(out). Core subunit of the mitochondrial membrane respiratory chain NADH dehydrogenase (Complex I) which catalyzes electron transfer from NADH through the respiratory chain, using ubiquinone as an electron acceptor. Part of the enzyme membrane arm which is embedded in the lipid bilayer and involved in proton translocation. In Sminthopsis crassicaudata (Fat-tailed dunnart), this protein is NADH-ubiquinone oxidoreductase chain 4L (MT-ND4L).